Consider the following 228-residue polypeptide: uncharacterized protein (228 aa).

21 to 28 (GMIALGKT) lines the ATP pocket.

This is an uncharacterized protein from Mycoplasma genitalium (strain ATCC 33530 / DSM 19775 / NCTC 10195 / G37) (Mycoplasmoides genitalium).